Here is a 990-residue protein sequence, read N- to C-terminus: Pro-apoptotic serine protease NMA111 (990 aa).

A disordered region spans residues 1–32 (MSVTNSNRKRSLSEVSEGSDPEAPAKTRNSYT). The segment at 73–263 (VVSIHFSQVA…LPLDRILRAL (191 aa)) is serine protease. Residues His-111, Asp-142, and Ser-225 each act as charge relay system in the active site. 2 consecutive PDZ domains span residues 290–368 (RRLG…QRGG) and 758–843 (SILT…VREG).

Belongs to the peptidase S1C family.

The protein localises to the nucleus. In terms of biological role, nuclear serine protease which mediates apoptosis. The chain is Pro-apoptotic serine protease NMA111 (NMA111) from Vanderwaltozyma polyspora (strain ATCC 22028 / DSM 70294 / BCRC 21397 / CBS 2163 / NBRC 10782 / NRRL Y-8283 / UCD 57-17) (Kluyveromyces polysporus).